The chain runs to 466 residues: Ribulose bisphosphate carboxylase large chain (466 aa).

K5 bears the N6,N6,N6-trimethyllysine mark. The substrate site is built by N114 and T164. The active-site Proton acceptor is K166. K168 contributes to the substrate binding site. Mg(2+) contacts are provided by K192, D194, and E195. K192 is modified (N6-carboxylysine). H285 serves as the catalytic Proton acceptor. Residues R286, H318, and S370 each coordinate substrate.

Belongs to the RuBisCO large chain family. Type I subfamily. In terms of assembly, heterohexadecamer of 8 large chains and 8 small chains; disulfide-linked. The disulfide link is formed within the large subunit homodimers. Mg(2+) serves as cofactor. Post-translationally, the disulfide bond which can form in the large chain dimeric partners within the hexadecamer appears to be associated with oxidative stress and protein turnover.

It localises to the plastid. It is found in the chloroplast. The catalysed reaction is 2 (2R)-3-phosphoglycerate + 2 H(+) = D-ribulose 1,5-bisphosphate + CO2 + H2O. It carries out the reaction D-ribulose 1,5-bisphosphate + O2 = 2-phosphoglycolate + (2R)-3-phosphoglycerate + 2 H(+). In terms of biological role, ruBisCO catalyzes two reactions: the carboxylation of D-ribulose 1,5-bisphosphate, the primary event in carbon dioxide fixation, as well as the oxidative fragmentation of the pentose substrate in the photorespiration process. Both reactions occur simultaneously and in competition at the same active site. This is Ribulose bisphosphate carboxylase large chain from Vitis aestivalis (Grape).